The chain runs to 781 residues: Catenin beta-1 (781 aa).

A disordered region spans residues 34–56 (GIHSGATTTAPSLSGKGNPEDED). ARM repeat units follow at residues 141-180 (NYQDDAELATRAIPELTKLLNDEDQVVVNKAAVMVHQLSK), 225-264 (REGLLAIFKSGGIPALVKMLGSPVDSVLFYAITTLHNLLL), 267-306 (EGAKMAVRLAGGLQKMVALLNKTNVKFLAITTDCLQILAY), 351-390 (SSNKPAIVEAGGMQALGLHLTDSSQRLVQNCLWTLRNLSD), 391-429 (AATKQEGMEGLLGTLVQLLGSDDINVVTCAAGILSNLTC), 432-473 (YKNK…HLTS), 479-519 (EMAQ…NLAL), 521-562 (PANH…QFVE), 584-623 (IHNRIVIRGLNTIPLFVQLLYSPIENIQRVAAGVLCDVAQ), and 625-664 (KEAAEAIEAEGATAPLTELLHSRNEGVATYAAAVLFRMSE). Positions 735 to 745 (MDHDMGGHHPG) are enriched in basic and acidic residues. The segment at 735–781 (MDHDMGGHHPGADYPVDGLPDLSHAQDLMDGLPPGDSNQLAWFDTDL) is disordered.

It belongs to the beta-catenin family. As to quaternary structure, interacts with EP-Cadherin/CDH3. Interacts with custos; the interaction is positively regulated by Wnt stimulation. In terms of processing, phosphorylation by gsk3b promotes ubiquitination and subsequent degradation by the proteasome. Post-translationally, ubiquitinated when phosphorylated by gsk3b, leading to its degradation. Expressed at intercalated disks in the heart (at protein level).

It localises to the cytoplasm. It is found in the nucleus. The protein localises to the cell membrane. In terms of biological role, key downstream component of the canonical Wnt signaling pathway. In the absence of Wnt, forms a complex with axin1, axin2, apc, csnk1a1 and gsk3b that promotes phosphorylation on N-terminal Ser and Thr residues and ubiquitination of ctnnb1 and its subsequent degradation by the proteasome. In the presence of Wnt ligand, ctnnb1 is not ubiquitinated and accumulates in the nucleus, where it acts as a coactivator for transcription factors of the TCF/LEF family, leading to activate Wnt responsive genes. Plays a key role in dorsoventral patterning: in prospective ventral blastomeres, its down-regulation by axin1 and axin2 leads to inhibit the Wnt signaling pathway, while in prospective dorsal blastomeres, degradation of axin results in stabilization and nuclear translocation of ctnnb1. This is Catenin beta-1 from Xenopus laevis (African clawed frog).